The primary structure comprises 219 residues: Uracil-DNA glycosylase (219 aa).

Residue Asp64 is the Proton acceptor of the active site.

This sequence belongs to the uracil-DNA glycosylase (UDG) superfamily. UNG family.

It localises to the cytoplasm. It catalyses the reaction Hydrolyzes single-stranded DNA or mismatched double-stranded DNA and polynucleotides, releasing free uracil.. Functionally, excises uracil residues from the DNA which can arise as a result of misincorporation of dUMP residues by DNA polymerase or due to deamination of cytosine. This chain is Uracil-DNA glycosylase, found in Leuconostoc citreum (strain KM20).